Reading from the N-terminus, the 1368-residue chain is DNA-directed RNA polymerase subunit beta (1368 aa).

This sequence belongs to the RNA polymerase beta chain family. As to quaternary structure, the RNAP catalytic core consists of 2 alpha, 1 beta, 1 beta' and 1 omega subunit. When a sigma factor is associated with the core the holoenzyme is formed, which can initiate transcription.

The catalysed reaction is RNA(n) + a ribonucleoside 5'-triphosphate = RNA(n+1) + diphosphate. In terms of biological role, DNA-dependent RNA polymerase catalyzes the transcription of DNA into RNA using the four ribonucleoside triphosphates as substrates. The protein is DNA-directed RNA polymerase subunit beta of Paraburkholderia phytofirmans (strain DSM 17436 / LMG 22146 / PsJN) (Burkholderia phytofirmans).